A 427-amino-acid polypeptide reads, in one-letter code: Probable fatty acid methyltransferase Rv3720 (427 aa).

Residues 167 to 168 (YT), 202 to 210 (LLDVGCGWG), and 227 to 232 (TLSAEQ) each bind S-adenosyl-L-methionine.

This sequence belongs to the CFA/CMAS family.

May be a S-adenosylmethionine-dependent methyltransferase involved in fatty acid metabolism. The polypeptide is Probable fatty acid methyltransferase Rv3720 (Mycobacterium tuberculosis (strain ATCC 25618 / H37Rv)).